The sequence spans 99 residues: uncharacterized protein (99 aa).

The signal sequence occupies residues Met-1–Gly-17. Cys-18 carries N-palmitoyl cysteine lipidation. Cys-18 carries the S-diacylglycerol cysteine lipid modification.

Its subcellular location is the cell membrane. This is an uncharacterized protein from Shigella boydii serotype 4 (strain Sb227).